A 341-amino-acid polypeptide reads, in one-letter code: Hyaluronidase A (341 aa).

Residues N3, N68, and N83 are each glycosylated (N-linked (GlcNAc...) asparagine). Intrachain disulfides connect C23–C311 and C189–C201.

This sequence belongs to the glycosyl hydrolase 56 family. As to expression, expressed by the venom gland.

It is found in the secreted. The catalysed reaction is Random hydrolysis of (1-&gt;4)-linkages between N-acetyl-beta-D-glucosamine and D-glucuronate residues in hyaluronate.. May hydrolyze high molecular weight hyaluronic acid to produce small oligosaccharides. This Vespa velutina (Asian yellow-legged hornet) protein is Hyaluronidase A.